Consider the following 254-residue polypeptide: Cell division protein FtsQ (254 aa).

Residues 1 to 27 lie on the Cytoplasmic side of the membrane; it reads MNILKRKTPQNIRFGEQKPKYYFHIRA. Residues 28–48 form a helical membrane-spanning segment; it reads FAVLLGVFFLLGVYFNWQSIL. The Periplasmic portion of the chain corresponds to 49–254; it reads EKMDDKPISA…AGAAVGMVDR (206 aa). In terms of domain architecture, POTRA spans 54–124; it reads KPISAFALVG…NRLSIWVSEY (71 aa).

Belongs to the FtsQ/DivIB family. FtsQ subfamily. In terms of assembly, part of a complex composed of FtsB, FtsL and FtsQ.

The protein localises to the cell inner membrane. Functionally, essential cell division protein. May link together the upstream cell division proteins, which are predominantly cytoplasmic, with the downstream cell division proteins, which are predominantly periplasmic. May control correct divisome assembly. The sequence is that of Cell division protein FtsQ from Haemophilus influenzae (strain ATCC 51907 / DSM 11121 / KW20 / Rd).